Reading from the N-terminus, the 339-residue chain is RNA 3'-terminal phosphate cyclase (339 aa).

Residues glutamine 101 and 283-286 contribute to the ATP site; that span reads HMSD. Catalysis depends on histidine 307, which acts as the Tele-AMP-histidine intermediate.

It belongs to the RNA 3'-terminal cyclase family. Type 1 subfamily.

It is found in the cytoplasm. It carries out the reaction a 3'-end 3'-phospho-ribonucleotide-RNA + ATP = a 3'-end 2',3'-cyclophospho-ribonucleotide-RNA + AMP + diphosphate. Its function is as follows. Catalyzes the conversion of 3'-phosphate to a 2',3'-cyclic phosphodiester at the end of RNA. The mechanism of action of the enzyme occurs in 3 steps: (A) adenylation of the enzyme by ATP; (B) transfer of adenylate to an RNA-N3'P to produce RNA-N3'PP5'A; (C) and attack of the adjacent 2'-hydroxyl on the 3'-phosphorus in the diester linkage to produce the cyclic end product. The biological role of this enzyme is unknown but it is likely to function in some aspects of cellular RNA processing. The polypeptide is RNA 3'-terminal phosphate cyclase (Sulfurisphaera tokodaii (strain DSM 16993 / JCM 10545 / NBRC 100140 / 7) (Sulfolobus tokodaii)).